Here is a 313-residue protein sequence, read N- to C-terminus: Protein FixB (313 aa).

Position 255–283 (255–283 (LYLAVGISGQIQHMVGANASQTIFAINKD)) interacts with FAD.

It belongs to the ETF alpha-subunit/FixB family. As to quaternary structure, heterodimer of FixA and FixB.

Its pathway is amine and polyamine metabolism; carnitine metabolism. Its function is as follows. Required for anaerobic carnitine reduction. May bring reductant to CaiA. The chain is Protein FixB from Shigella flexneri.